We begin with the raw amino-acid sequence, 136 residues long: Group 1 truncated hemoglobin GlbN (136 aa).

Residue His-81 coordinates heme.

This sequence belongs to the truncated hemoglobin family. Group I subfamily. Homodimer. It depends on heme as a cofactor.

Binds oxygen cooperatively with very high affinity (P(50) = 0.013 mmHg at 20 degrees Celsius) because of a fast combination (25 microM(-1)sec(-1)) and a slow dissociation (0.2 sec(-1)) rate. This Mycobacterium bovis (strain ATCC BAA-935 / AF2122/97) protein is Group 1 truncated hemoglobin GlbN (glbN).